The chain runs to 197 residues: Nucleoid occlusion factor SlmA (197 aa).

Residues isoleucine 7 to leucine 67 enclose the HTH tetR-type domain. The H-T-H motif DNA-binding region spans threonine 30–phenylalanine 49. Residues alanine 110–glutamate 130 adopt a coiled-coil conformation.

The protein belongs to the nucleoid occlusion factor SlmA family. As to quaternary structure, homodimer. Interacts with FtsZ.

It localises to the cytoplasm. The protein resides in the nucleoid. In terms of biological role, required for nucleoid occlusion (NO) phenomenon, which prevents Z-ring formation and cell division over the nucleoid. Acts as a DNA-associated cell division inhibitor that binds simultaneously chromosomal DNA and FtsZ, and disrupts the assembly of FtsZ polymers. SlmA-DNA-binding sequences (SBS) are dispersed on non-Ter regions of the chromosome, preventing FtsZ polymerization at these regions. In Shewanella sp. (strain W3-18-1), this protein is Nucleoid occlusion factor SlmA.